A 666-amino-acid chain; its full sequence is UvrABC system protein B (666 aa).

Residues 25–412 enclose the Helicase ATP-binding domain; that stretch reads NGIKNNNKWQ…SENIAEQVIR (388 aa). 38–45 contributes to the ATP binding site; it reads GVTGSGKT. Residues 91–114 carry the Beta-hairpin motif; the sequence is YYDYYQPEAYVAQTDTYIEKDASI. Residues 429-595 enclose the Helicase C-terminal domain; that stretch reads QIDDLYSEIK…TIKKAVRDVI (167 aa). Residues 622–657 enclose the UVR domain; sequence DKLIKEFEKEMKEAAKELQFEKAAYFRDKVNELKKK.

The protein belongs to the UvrB family. As to quaternary structure, forms a heterotetramer with UvrA during the search for lesions. Interacts with UvrC in an incision complex.

The protein localises to the cytoplasm. In terms of biological role, the UvrABC repair system catalyzes the recognition and processing of DNA lesions. A damage recognition complex composed of 2 UvrA and 2 UvrB subunits scans DNA for abnormalities. Upon binding of the UvrA(2)B(2) complex to a putative damaged site, the DNA wraps around one UvrB monomer. DNA wrap is dependent on ATP binding by UvrB and probably causes local melting of the DNA helix, facilitating insertion of UvrB beta-hairpin between the DNA strands. Then UvrB probes one DNA strand for the presence of a lesion. If a lesion is found the UvrA subunits dissociate and the UvrB-DNA preincision complex is formed. This complex is subsequently bound by UvrC and the second UvrB is released. If no lesion is found, the DNA wraps around the other UvrB subunit that will check the other stand for damage. This is UvrABC system protein B from Clostridium acetobutylicum (strain ATCC 824 / DSM 792 / JCM 1419 / IAM 19013 / LMG 5710 / NBRC 13948 / NRRL B-527 / VKM B-1787 / 2291 / W).